Reading from the N-terminus, the 602-residue chain is Elongation factor 4 (602 aa).

A tr-type G domain is found at 6–188 (DRIRNFCIIA…RIVRDVPPPG (183 aa)). Residues 18–23 (DHGKST) and 135–138 (NKID) contribute to the GTP site.

This sequence belongs to the TRAFAC class translation factor GTPase superfamily. Classic translation factor GTPase family. LepA subfamily.

It is found in the cell membrane. It catalyses the reaction GTP + H2O = GDP + phosphate + H(+). Functionally, required for accurate and efficient protein synthesis under certain stress conditions. May act as a fidelity factor of the translation reaction, by catalyzing a one-codon backward translocation of tRNAs on improperly translocated ribosomes. Back-translocation proceeds from a post-translocation (POST) complex to a pre-translocation (PRE) complex, thus giving elongation factor G a second chance to translocate the tRNAs correctly. Binds to ribosomes in a GTP-dependent manner. This is Elongation factor 4 from Desulforudis audaxviator (strain MP104C).